We begin with the raw amino-acid sequence, 492 residues long: ATP synthase subunit beta, chloroplastic (492 aa).

Gly-170–Thr-177 serves as a coordination point for ATP.

The protein belongs to the ATPase alpha/beta chains family. As to quaternary structure, F-type ATPases have 2 components, CF(1) - the catalytic core - and CF(0) - the membrane proton channel. CF(1) has five subunits: alpha(3), beta(3), gamma(1), delta(1), epsilon(1). CF(0) has four main subunits: a(1), b(1), b'(1) and c(9-12).

Its subcellular location is the plastid. It is found in the chloroplast thylakoid membrane. It catalyses the reaction ATP + H2O + 4 H(+)(in) = ADP + phosphate + 5 H(+)(out). Functionally, produces ATP from ADP in the presence of a proton gradient across the membrane. The catalytic sites are hosted primarily by the beta subunits. The polypeptide is ATP synthase subunit beta, chloroplastic (Anthoceros angustus (Hornwort)).